Reading from the N-terminus, the 255-residue chain is 5-oxoprolinase subunit A (255 aa).

This sequence belongs to the LamB/PxpA family. In terms of assembly, forms a complex composed of PxpA, PxpB and PxpC.

The catalysed reaction is 5-oxo-L-proline + ATP + 2 H2O = L-glutamate + ADP + phosphate + H(+). Catalyzes the cleavage of 5-oxoproline to form L-glutamate coupled to the hydrolysis of ATP to ADP and inorganic phosphate. The polypeptide is 5-oxoprolinase subunit A (Nitrobacter hamburgensis (strain DSM 10229 / NCIMB 13809 / X14)).